A 456-amino-acid polypeptide reads, in one-letter code: Argininosuccinate lyase (456 aa).

It belongs to the lyase 1 family. Argininosuccinate lyase subfamily.

Its subcellular location is the cytoplasm. It carries out the reaction 2-(N(omega)-L-arginino)succinate = fumarate + L-arginine. It participates in amino-acid biosynthesis; L-arginine biosynthesis; L-arginine from L-ornithine and carbamoyl phosphate: step 3/3. The chain is Argininosuccinate lyase from Listeria monocytogenes serovar 1/2a (strain ATCC BAA-679 / EGD-e).